Consider the following 20-residue polypeptide: Trypsin inhibitor DE-3 (20 aa).

It belongs to the protease inhibitor I3 (leguminous Kunitz-type inhibitor) family.

Functionally, inhibition of trypsin. This chain is Trypsin inhibitor DE-3, found in Erythrina corallodendron (Coral tree).